Here is a 1349-residue protein sequence, read N- to C-terminus: Protein strawberry notch homolog 2 (1349 aa).

Disordered regions lie at residues 170–212, 609–633, and 1319–1349; these read YQSH…QHPD, STRR…PKAS, and PTET…FPNS. Positions 177 to 188 are enriched in acidic residues; that stretch reads EEEEGEEEEETE. Residues 609–631 show a composition bias toward basic residues; it reads STRRRRDRGGGKRKRRPRGRGPK.

This sequence belongs to the SBNO family. In terms of assembly, interacts with TAL1; this interaction inhibits TAL1 occupancy of the DCSTAMP promoter, leading to the activation of the DCSTAMP promoter by the transcription factor MITF. As to expression, expressed in the spleen and bone marrow, and to a lesser extent in the kidney, liver, brain, skin, heart and muscle. Expressed predominantly in osteoclasts, and to a lesser extent in T-cells, B-cells and osteoblasts. Expressed in macrophages.

Its function is as follows. Acts as a transcriptional coregulator, that can have both coactivator and corepressor functions. Inhibits the DCSTAMP-repressive activity of TAL1, hence enhancing the access of the transcription factor MITF to the DC-STAMP promoter in osteoclast. Plays a role in bone homeostasis; required as a positive regulator in TNFSF11//RANKL-mediated osteoclast fusion via a DCSTAMP-dependent pathway. May also be required in the regulation of osteoblast differentiation. Involved in the transcriptional corepression of NF-kappaB in macrophages. Plays a role as a regulator in the pro-inflammatory cascade. In Mus musculus (Mouse), this protein is Protein strawberry notch homolog 2 (Sbno2).